We begin with the raw amino-acid sequence, 94 residues long: Large ribosomal subunit protein uL23 (94 aa).

Belongs to the universal ribosomal protein uL23 family. In terms of assembly, part of the 50S ribosomal subunit. Contacts protein L29, and trigger factor when it is bound to the ribosome.

Functionally, one of the early assembly proteins it binds 23S rRNA. One of the proteins that surrounds the polypeptide exit tunnel on the outside of the ribosome. Forms the main docking site for trigger factor binding to the ribosome. In Phytoplasma australiense, this protein is Large ribosomal subunit protein uL23.